A 97-amino-acid chain; its full sequence is uncharacterized protein (97 aa).

This is an uncharacterized protein from Methanocaldococcus jannaschii (strain ATCC 43067 / DSM 2661 / JAL-1 / JCM 10045 / NBRC 100440) (Methanococcus jannaschii).